Consider the following 1860-residue polypeptide: Collagen alpha-1(XXVII) chain (1860 aa).

A signal peptide spans 1–41 (MGAGSARGARGTAAAAAARGGGFLFSWILVSFACHLASTQG). The propeptide at 42-624 (APEDVDILQR…AGSTPFPLLM (583 aa)) is N-terminal propeptide. The Laminin G-like domain maps to 71–236 (QSGFIFTQRA…NYCTHLRKQC (166 aa)). An N-linked (GlcNAc...) asparagine glycan is attached at Asn271. Disordered regions lie at residues 278–608 (ALGS…TSSG), 625–772 (GPPG…GSDG), and 851–1625 (LKGD…IQLQ). 2 stretches are compositionally biased toward polar residues: residues 298-309 (TKPQRTSPTNPH) and 386-409 (HPTQKTAPSSFTKSALPTQKQVPP). Residues 432–445 (MPRPPPPSTRPLPP) are compositionally biased toward pro residues. Low complexity-rich tracts occupy residues 446-457 (TTSSSKKPIPTL) and 485-505 (TALSSSPAPTPGSTRSTRPPA). A compositionally biased stretch (polar residues) spans 509–518 (PPTSGTSTPR). 2 stretches are compositionally biased toward low complexity: residues 572–588 (TTRPSPRQPQPSQQTTP) and 599–608 (SSSPRPTSSG). Collagen-like domains lie at 625–679 (GPPG…GDPG), 688–747 (GAKG…PGPV), 748–807 (GDPG…DGNP), 808–867 (GELG…SGDP), 871–930 (GDKG…KGKP), 931–990 (GARG…PGPV), 1003–1062 (GEPG…RGAK), 1066–1125 (GPRG…PGTK), 1126–1185 (GLPG…IGQR), 1192–1251 (GDSG…QGEK), 1258–1317 (GAKG…KGIV), 1318–1378 (GPLG…RGKP), 1382–1441 (GQPG…EGIA), 1442–1501 (GPDG…PGQL), 1502–1561 (GPPG…QGPR), and 1562–1621 (GPPG…PGGP). The triple-helical region stretch occupies residues 625-1618 (GPPGPKGDCG…RGRPGPPGPP (994 aa)). A compositionally biased stretch (pro residues) spans 654–669 (RGPPGPYGNPGLPGPP). Positions 714-734 (PGPAGHPGEQGQPGPEGSPGA) are enriched in low complexity. 2 stretches are compositionally biased toward low complexity: residues 911–924 (FPGDIGPPGDNGPE) and 932–944 (ARGLPGPRGQLGP). Positions 1033 to 1042 (GMPGGMGTPG) are enriched in gly residues. Over residues 1043–1053 (EPGPQGPPGSR) the composition is skewed to pro residues. Positions 1130–1142 (EPGPQGPQGPIGP) are enriched in pro residues. 2 stretches are compositionally biased toward basic and acidic residues: residues 1202–1220 (LKGDRGDPGPDGEHGEKGQ) and 1241–1253 (PEGKSGKQGEKGR). 2 stretches are compositionally biased toward basic and acidic residues: residues 1326–1338 (KGEKGEQGEDGKA) and 1350–1360 (PVGDRGDRGEP). A compositionally biased stretch (low complexity) spans 1449 to 1458 (RDGQAGQQGE). Low complexity predominate over residues 1572–1587 (IVGPLGILGPSGLPGP). The segment covering 1603–1620 (RGPPGPRGRPGPPGPPGG) has biased composition (pro residues). Positions 1622 to 1860 (IQLQQDDLGA…RLEVGPACFL (239 aa)) are cleaved as a propeptide — C-terminal propeptide. The region spanning 1660–1860 (GEIFKTLHYL…RLEVGPACFL (201 aa)) is the Fibrillar collagen NC1 domain. 3 cysteine pairs are disulfide-bonded: Cys1690-Cys1722, Cys1731-Cys1858, and Cys1767-Cys1811. Positions 1708, 1710, 1713, and 1716 each coordinate Ca(2+). Asn1769 is a glycosylation site (N-linked (GlcNAc...) asparagine).

The protein belongs to the fibrillar collagen family.

It localises to the secreted. Its subcellular location is the extracellular space. The protein resides in the extracellular matrix. Plays a role during the calcification of cartilage and the transition of cartilage to bone. The protein is Collagen alpha-1(XXVII) chain (COL27A1) of Homo sapiens (Human).